Here is a 728-residue protein sequence, read N- to C-terminus: NF-kappa-B inhibitor zeta (728 aa).

A disordered region spans residues 45-107 (GAGDTGYLSA…PHMGVGRQQR (63 aa)). Residues 53–82 (SAVPSAPGSPGSDSSDFSSTSSVSSCGAVE) show a composition bias toward low complexity. Positions 83 to 96 (SRPRGGARAERPQV) are enriched in basic and acidic residues. In terms of domain architecture, OCA spans 107–129 (RGPFQGVRVKNSVKELLLHIRSN). A Nuclear localization signal motif is present at residues 163–178 (KRKGPDPLSDGPVCKR). Composition is skewed to polar residues over residues 241-250 (PTVPQNSPRD) and 268-288 (QPFQ…YQYS). The interval 241 to 334 (PTVPQNSPRD…SQSPKYDSNL (94 aa)) is disordered. Residues 303–315 (QQQHQQNYPHNSP) are compositionally biased toward low complexity. Residues 316-330 (LQFSPYSRMSQSPKY) are compositionally biased toward polar residues. Residues 329–403 (KYDSNLFDTH…VGVHDVGSHS (75 aa)) are required for transcriptional activity. The interaction with NFKB1/p50 stretch occupies residues 414 to 728 (MGSPMNTTQL…KSIQQRAPPY (315 aa)). 7 ANK repeats span residues 453–482 (DGDT…ALHM), 489–518 (NGQS…QVNT), 522–551 (WGRT…RSNQ), 561–589 (DGLT…SHSP), 591–617 (VQDL…AVEA), 622–651 (SGRT…CLSF), and 658–691 (NGNT…DPST).

In terms of assembly, interacts with NFKB1/p50. Interacts with RELA. Interacts with AKIRIN2. In terms of tissue distribution, expressed in kidney, liver, lung and heart. Expressed at very low levels in skeletal muscle, spleen and brain.

It localises to the nucleus. Functionally, involved in regulation of NF-kappa-B transcription factor complexes. Inhibits NF-kappa-B activity without affecting its nuclear translocation upon stimulation. Inhibits DNA-binding of RELA and NFKB1/p50, and of the NF-kappa-B p65-p50 heterodimer and the NF-kappa-B p50-p50 homodimer. Also seems to activate NF-kappa-B-mediated transcription. In vitro, upon association with NFKB1/p50 has transcriptional activation activity and, together with NFKB1/p50 and RELA, is recruited to LCN2 promoters. Promotes transcription of LCN2 and DEFB4. Is recruited to IL-6 promoters and activates IL-6 but decreases TNF-alpha production in response to LPS. Seems to be involved in the induction of inflammatory genes activated through TLR/IL-1 receptor signaling. Involved in the induction of T helper 17 cells (Th17) differentiation upon recognition of antigen by T cell antigen receptor (TCR). The polypeptide is NF-kappa-B inhibitor zeta (Nfkbiz) (Mus musculus (Mouse)).